Reading from the N-terminus, the 305-residue chain is Endonuclease III-like protein 1 (305 aa).

A mitochondrion-targeting transit peptide spans 1–28; the sequence is MNAAGVRMVVTRARSRGTGASLRRRGEK. The tract at residues 1 to 83 is disordered; the sequence is MNAAGVRMVV…HLQAPSWQPQ (83 aa). Position 64 is a phosphoserine (Ser64). The 25-residue stretch at 192 to 216 folds into the HhH domain; the sequence is RYDGDIPASVAELVALPGVGPKMAH. Lys213 (nucleophile; for N-glycosylase activity) is an active-site residue. [4Fe-4S] cluster contacts are provided by Cys283, Cys290, Cys293, and Cys299.

The protein belongs to the Nth/MutY family. Interacts with YBX1. Interacts with ERCC5/XPG; the interaction stimulates NTHL1 activity and NTHL1 binding to its DNA substrate. [4Fe-4S] cluster serves as cofactor.

The protein resides in the nucleus. It is found in the mitochondrion. It carries out the reaction 2'-deoxyribonucleotide-(2'-deoxyribose 5'-phosphate)-2'-deoxyribonucleotide-DNA = a 3'-end 2'-deoxyribonucleotide-(2,3-dehydro-2,3-deoxyribose 5'-phosphate)-DNA + a 5'-end 5'-phospho-2'-deoxyribonucleoside-DNA + H(+). Bifunctional DNA N-glycosylase with associated apurinic/apyrimidinic (AP) lyase function that catalyzes the first step in base excision repair (BER), the primary repair pathway for the repair of oxidative DNA damage. The DNA N-glycosylase activity releases the damaged DNA base from DNA by cleaving the N-glycosidic bond, leaving an AP site. The AP lyase activity cleaves the phosphodiester bond 3' to the AP site by a beta-elimination. Primarily recognizes and repairs oxidative base damage of pyrimidines. The sequence is that of Endonuclease III-like protein 1 from Bos taurus (Bovine).